The following is a 244-amino-acid chain: High frequency lysogenization protein HflD homolog (244 aa).

This sequence belongs to the HflD family.

It localises to the cytoplasm. It is found in the cell inner membrane. The sequence is that of High frequency lysogenization protein HflD homolog from Acinetobacter baumannii (strain ATCC 17978 / DSM 105126 / CIP 53.77 / LMG 1025 / NCDC KC755 / 5377).